We begin with the raw amino-acid sequence, 403 residues long: Protein STRICTOSIDINE SYNTHASE-LIKE 13 (403 aa).

Residues 1 to 42 form the signal peptide; sequence MEKKGQHGTYESMMTHHPILCIIALSVLFIAIDPFHMSPIGG. 2 N-linked (GlcNAc...) asparagine glycosylation sites follow: N66 and N206.

This sequence belongs to the strictosidine synthase family.

It is found in the vacuole. Its function is as follows. Required for the exine formation during pollen development. The sequence is that of Protein STRICTOSIDINE SYNTHASE-LIKE 13 from Arabidopsis thaliana (Mouse-ear cress).